Consider the following 922-residue polypeptide: Neuropilin-1 (922 aa).

The signal sequence occupies residues 1–21; that stretch reads MERGLPLLCATLALALALAGA. The Extracellular portion of the chain corresponds to 22 to 855; it reads FRSDKCGGTI…PGNVLKTLDP (834 aa). Disulfide bonds link cysteine 27/cysteine 54, cysteine 82/cysteine 104, and cysteine 147/cysteine 173. CUB domains follow at residues 27-141 and 147-265; these read CGGT…YEIF and CSQN…YSVL. Asparagine 150 is a glycosylation site (N-linked (GlcNAc...) asparagine). Ca(2+) contacts are provided by glutamate 195, aspartate 209, and aspartate 250. Residues cysteine 206 and cysteine 228 are joined by a disulfide bond. 3 N-linked (GlcNAc...) asparagine glycosylation sites follow: asparagine 261, asparagine 300, and asparagine 522. 2 disulfide bridges follow: cysteine 275–cysteine 424 and cysteine 431–cysteine 583. F5/8 type C domains are found at residues 275–424 and 431–583; these read CMEA…VYGC and CSGM…LLGC. An O-linked (Xyl...) (chondroitin sulfate) serine; alternate glycan is attached at serine 612. The O-linked (Xyl...) (heparan sulfate) serine; alternate glycan is linked to serine 612. The MAM domain maps to 645-811; that stretch reads TYGFNCEFGW…NHIPQEDCAK (167 aa). Residue serine 829 is glycosylated (O-linked (Xyl...) (chondroitin sulfate) serine). Asparagine 841 is a glycosylation site (N-linked (GlcNAc...) asparagine). Residues 856 to 880 form a helical membrane-spanning segment; it reads ILITIIAMSALGVLLGAVCGVVLYC. Over 881–922 the chain is Cytoplasmic; that stretch reads ACWHNGMSERNLSALENYNFELVDGVKLKKDKLNPQSNYSEA. Serine 893 is modified (phosphoserine).

Belongs to the neuropilin family. Homodimer, and heterodimer with NRP2. Binds PLXNB1. Interacts with FER. Interacts with VEGFA. Interacts with ABCB8/MITOSUR in mitochondria. As to expression, found in the embryonic nervous system. Expressed in dorsal root ganglia.

Its subcellular location is the mitochondrion membrane. The protein resides in the cell membrane. It localises to the cytoplasm. Functionally, cell-surface receptor involved in the development of the cardiovascular system, in angiogenesis, in the formation of certain neuronal circuits and in organogenesis outside the nervous system. Mediates the chemorepulsant activity of semaphorins. Recognizes a C-end rule (CendR) motif R/KXXR/K on its ligands which causes cellular internalization and vascular leakage. It binds to semaphorin 3A, the PLGF-2 isoform of PGF, the VEGF165 isoform of VEGFA and VEGFB. Coexpression with KDR results in increased VEGF165 binding to KDR as well as increased chemotaxis. Regulates VEGF-induced angiogenesis. Binding to VEGFA initiates a signaling pathway needed for motor neuron axon guidance and cell body migration, including for the caudal migration of facial motor neurons from rhombomere 4 to rhombomere 6 during embryonic development. Regulates mitochondrial iron transport via interaction with ABCB8/MITOSUR. The protein is Neuropilin-1 (Nrp1) of Rattus norvegicus (Rat).